The sequence spans 437 residues: Nuclear hormone receptor family member nhr-28 (437 aa).

Residues 5–80 (KSPCSVCGEA…VGMRKSAVQR (76 aa)) constitute a DNA-binding region (nuclear receptor). 2 consecutive NR C4-type zinc fingers follow at residues 8 to 28 (CSVC…CRAC) and 44 to 68 (CRAM…FTKC). One can recognise an NR LBD domain in the interval 115–376 (YEETGMPTLS…ETFYELVSGR (262 aa)).

It belongs to the nuclear hormone receptor family. In terms of tissue distribution, expressed in the pharynx, intestine and hypodermis.

The protein resides in the nucleus. Functionally, orphan nuclear receptor. The protein is Nuclear hormone receptor family member nhr-28 (nhr-28) of Caenorhabditis elegans.